A 660-amino-acid chain; its full sequence is Sodium/nucleoside cotransporter 2 (660 aa).

Serine 46 is subject to Phosphoserine. 14 helical membrane-spanning segments follow: residues isoleucine 82–asparagine 102, alanine 106–leucine 125, lysine 150–aspartate 168, glutamate 174–lysine 194, arginine 202–glutamate 222, isoleucine 235–valine 255, glutamine 262–leucine 282, threonine 297–methionine 316, valine 338–phenylalanine 357, leucine 364–tyrosine 383, valine 425–tryptophan 445, serine 456–tryptophan 476, threonine 531–leucine 551, and alanine 569–valine 589.

Belongs to the concentrative nucleoside transporter (CNT) (TC 2.A.41) family.

Its subcellular location is the membrane. It localises to the apicolateral cell membrane. It carries out the reaction adenosine(out) + Na(+)(out) = adenosine(in) + Na(+)(in). It catalyses the reaction inosine(out) + Na(+)(out) = inosine(in) + Na(+)(in). The enzyme catalyses guanosine(out) + Na(+)(out) = guanosine(in) + Na(+)(in). The catalysed reaction is uridine(out) + Na(+)(out) = uridine(in) + Na(+)(in). Functionally, sodium-dependent and purine-selective transporter. Exhibits the transport characteristics of the nucleoside transport system cif or N1 subtype (N1/cif) (selective for purine nucleosides and uridine). Plays a critical role in specific uptake and salvage of purine nucleosides in kidney and other tissues. May contribute to regulate the transport of organic compounds in testes across the blood-testis-barrier. This is Sodium/nucleoside cotransporter 2 (Slc28a2) from Mus musculus (Mouse).